The sequence spans 422 residues: Mannose-1-phosphate guanylyltransferase regulatory subunit alpha-B (422 aa).

The interval 2–253 (LKAIILIGGP…QHFWSQIKSA (252 aa)) is substrate-binding domain. Residues Glu85 and Gln249 each contribute to the GDP-alpha-D-mannose site. The hexapeptide repeat domain stretch occupies residues 275–422 (LATNQGGTPK…NRSFKNQIIL (148 aa)). Positions 358–386 (TPSDPNPNDPYAKIDSETLFRDGGLTPSI) are C-loop.

The protein belongs to the transferase hexapeptide repeat family. In terms of assembly, component of the GMPPA-GMPPB mannose-1-phosphate guanylyltransferase complex composed of 4 GMPPA subunits and 8 GMPPB subunits; the complex is organized into three layers, a central layer made up of 2 GMPPA dimers sandwiched between two layers each made up of 2 GMPPB dimers.

It functions in the pathway nucleotide-sugar biosynthesis; GDP-alpha-D-mannose biosynthesis; GDP-alpha-D-mannose from alpha-D-mannose 1-phosphate (GTP route): step 1/1. In terms of biological role, regulatory subunit of the GMPPA-GMPPB mannose-1-phosphate guanylyltransferase complex; reduces the catalytic activity of GMPPB when part of the complex. Mediates allosteric feedback inhibition of GMPPB catalytic activity upon binding GDP-alpha-D-mannose. Together with GMPPB regulates GDP-alpha-D-mannose levels. One of two paralogs (gmppaa and gmppab) that may have redundant functions. This Danio rerio (Zebrafish) protein is Mannose-1-phosphate guanylyltransferase regulatory subunit alpha-B (gmppab).